Reading from the N-terminus, the 363-residue chain is UDP-3-O-acylglucosamine N-acyltransferase (363 aa).

Histidine 266 serves as the catalytic Proton acceptor.

Belongs to the transferase hexapeptide repeat family. LpxD subfamily. In terms of assembly, homotrimer.

The catalysed reaction is a UDP-3-O-[(3R)-3-hydroxyacyl]-alpha-D-glucosamine + a (3R)-hydroxyacyl-[ACP] = a UDP-2-N,3-O-bis[(3R)-3-hydroxyacyl]-alpha-D-glucosamine + holo-[ACP] + H(+). Its pathway is bacterial outer membrane biogenesis; LPS lipid A biosynthesis. Catalyzes the N-acylation of UDP-3-O-acylglucosamine using 3-hydroxyacyl-ACP as the acyl donor. Is involved in the biosynthesis of lipid A, a phosphorylated glycolipid that anchors the lipopolysaccharide to the outer membrane of the cell. This chain is UDP-3-O-acylglucosamine N-acyltransferase, found in Bordetella parapertussis (strain 12822 / ATCC BAA-587 / NCTC 13253).